The sequence spans 106 residues: Replication restart protein PriB (106 aa).

Positions 4 to 103 (TNRLVLSGTV…LHAEQIEFID (100 aa)) constitute an SSB domain.

The protein belongs to the PriB family. In terms of assembly, homodimer. Interacts with PriA and DnaT. Component of the replication restart primosome. Primosome assembly occurs via a 'hand-off' mechanism. PriA binds to replication forks, subsequently PriB then DnaT bind; DnaT then displaces ssDNA to generate the helicase loading substrate.

In terms of biological role, involved in the restart of stalled replication forks, which reloads the replicative helicase on sites other than the origin of replication; the PriA-PriB pathway is the major replication restart pathway. During primosome assembly it facilitates complex formation between PriA and DnaT on DNA; stabilizes PriA on DNA. Stimulates the DNA unwinding activity of PriA helicase. The chain is Replication restart protein PriB from Yersinia enterocolitica serotype O:8 / biotype 1B (strain NCTC 13174 / 8081).